A 224-amino-acid polypeptide reads, in one-letter code: N-(5'-phosphoribosyl)anthranilate isomerase (224 aa).

It belongs to the TrpF family.

The catalysed reaction is N-(5-phospho-beta-D-ribosyl)anthranilate = 1-(2-carboxyphenylamino)-1-deoxy-D-ribulose 5-phosphate. It functions in the pathway amino-acid biosynthesis; L-tryptophan biosynthesis; L-tryptophan from chorismate: step 3/5. The chain is N-(5'-phosphoribosyl)anthranilate isomerase from Allorhizobium ampelinum (strain ATCC BAA-846 / DSM 112012 / S4) (Agrobacterium vitis (strain S4)).